Consider the following 246-residue polypeptide: NH(3)-dependent NAD(+) synthetase (246 aa).

29–36 provides a ligand contact to ATP; it reads GLSGGIDS. Asp-35 is a binding site for Mg(2+). Position 110 (Arg-110) interacts with deamido-NAD(+). Thr-130 lines the ATP pocket. Glu-135 is a Mg(2+) binding site. Residues Lys-159 and Ser-181 each coordinate ATP.

This sequence belongs to the NAD synthetase family. In terms of assembly, homodimer.

The catalysed reaction is deamido-NAD(+) + NH4(+) + ATP = AMP + diphosphate + NAD(+) + H(+). It participates in cofactor biosynthesis; NAD(+) biosynthesis; NAD(+) from deamido-NAD(+) (ammonia route): step 1/1. Functionally, catalyzes the ATP-dependent amidation of deamido-NAD to form NAD. Uses ammonia as a nitrogen source. This chain is NH(3)-dependent NAD(+) synthetase, found in Campylobacter jejuni subsp. doylei (strain ATCC BAA-1458 / RM4099 / 269.97).